Consider the following 421-residue polypeptide: UDP-N-acetylglucosamine 1-carboxyvinyltransferase (421 aa).

22–23 (KN) serves as a coordination point for phosphoenolpyruvate. Position 91 (R91) interacts with UDP-N-acetyl-alpha-D-glucosamine. The active-site Proton donor is C115. C115 bears the 2-(S-cysteinyl)pyruvic acid O-phosphothioketal mark. UDP-N-acetyl-alpha-D-glucosamine is bound by residues 120–124 (RPVDL), 160–163 (KVSV), D305, and I327.

This sequence belongs to the EPSP synthase family. MurA subfamily.

The protein localises to the cytoplasm. It catalyses the reaction phosphoenolpyruvate + UDP-N-acetyl-alpha-D-glucosamine = UDP-N-acetyl-3-O-(1-carboxyvinyl)-alpha-D-glucosamine + phosphate. Its pathway is cell wall biogenesis; peptidoglycan biosynthesis. Functionally, cell wall formation. Adds enolpyruvyl to UDP-N-acetylglucosamine. The chain is UDP-N-acetylglucosamine 1-carboxyvinyltransferase from Photorhabdus laumondii subsp. laumondii (strain DSM 15139 / CIP 105565 / TT01) (Photorhabdus luminescens subsp. laumondii).